The following is a 76-amino-acid chain: Bacteriocin uberolysin (76 aa).

Positions Met1–Glu6 are excised as a propeptide. A cross-link (cyclopeptide (Leu-Trp)) is located at residues Leu7–Trp76.

Belongs to the bacteriocin class V family.

The protein resides in the secreted. In terms of biological role, cyclopeptide antibiotic with bacteriolytic activity against most streptococci (except S.rattus and S.mutans), Listeria spp., enterococci and staphylococci. This Streptococcus uberis protein is Bacteriocin uberolysin (ublA).